A 239-amino-acid chain; its full sequence is MSVISMKQLLEAGVHFGHQTRRWNPKMKKYIFVERNGIYIIDLQKTVKKLEEAYDFMRQVGQDGGKVLFVGTKKQAQEAIKDEAERSGNYYINQRWLGGTLTNFGTIQKRVARMKQIEKMEEEGTFEVLPKKEVIQLKKEHERLIKFLGGIRDMHDLPDVMFVVDPRKERIAVAEARKLNIPLVGIVDTNCDPDEIDYVIPANDDAIRAVKLLTAKMADALIESKQGEEEAPAVEAAAE.

This sequence belongs to the universal ribosomal protein uS2 family.

In Lysinibacillus sphaericus (strain C3-41), this protein is Small ribosomal subunit protein uS2.